The following is a 240-amino-acid chain: Acyl-coenzyme A thioesterase THEM4 (240 aa).

The N-terminal 36 residues, M1–F36, are a transit peptide targeting the mitochondrion. 2 positions are modified to phosphoserine: S37 and S38. An N6-succinyllysine mark is found at K55 and K66. K74 is modified (N6-acetyllysine). K98 carries the post-translational modification N6-succinyllysine. D161 acts as the Proton donor/acceptor in catalysis. Residues N183, K185, and R206–K207 contribute to the substrate site. Residue K207 is modified to N6-succinyllysine.

Belongs to the THEM4/THEM5 thioesterase family. As to quaternary structure, homodimer and homotetramer. Interacts with AKT1 in the cytosol. Post-translationally, phosphorylated. As to expression, expressed predominantly in skeletal muscle, testis, uterus, brain and kidney. Down-regulated in glioblastoma or glioma compared to non-neoplastic brain due to promoter hypermethylation.

The protein localises to the cell membrane. The protein resides in the cell projection. Its subcellular location is the ruffle membrane. It is found in the cytoplasm. It localises to the mitochondrion. The protein localises to the mitochondrion inner membrane. The protein resides in the mitochondrion intermembrane space. The enzyme catalyses hexadecanoyl-CoA + H2O = hexadecanoate + CoA + H(+). It carries out the reaction octanoyl-CoA + H2O = octanoate + CoA + H(+). The catalysed reaction is decanoyl-CoA + H2O = decanoate + CoA + H(+). It catalyses the reaction dodecanoyl-CoA + H2O = dodecanoate + CoA + H(+). The enzyme catalyses tetradecanoyl-CoA + H2O = tetradecanoate + CoA + H(+). It carries out the reaction (9Z)-octadecenoyl-CoA + H2O = (9Z)-octadecenoate + CoA + H(+). The catalysed reaction is (5Z,8Z,11Z,14Z)-eicosatetraenoyl-CoA + H2O = (5Z,8Z,11Z,14Z)-eicosatetraenoate + CoA + H(+). Has acyl-CoA thioesterase activity towards medium and long-chain (C14 to C18) fatty acyl-CoA substrates, and probably plays a role in mitochondrial fatty acid metabolism. Plays a role in the apoptotic process, possibly via its regulation of AKT1 activity. According to PubMed:11598301, inhibits AKT1 phosphorylation and activity. According to PubMed:17615157, enhances AKT1 activity by favoring its phosphorylation and translocation to plasma membrane. The protein is Acyl-coenzyme A thioesterase THEM4 (THEM4) of Homo sapiens (Human).